A 439-amino-acid polypeptide reads, in one-letter code: Branched-chain amino acid permease BrnQ (439 aa).

Residues 1–9 are Cytoplasmic-facing; sequence MTHQLRSRD. A helical transmembrane segment spans residues 10–30; sequence IIALGFMTFALFVGAGNIIFP. The Periplasmic portion of the chain corresponds to 31–45; the sequence is PMVGLQAGEHVWTAA. Residues 46 to 66 form a helical membrane-spanning segment; sequence FGFLITAVGLPVLTVVALAKV. The Cytoplasmic portion of the chain corresponds to 67 to 79; the sequence is GGGVDSLSTPIGK. Residues 80–100 form a helical membrane-spanning segment; it reads VAGVLLATVCYLAVGPLFATP. Over 101-118 the chain is Periplasmic; sequence RTATVSFEVGIAPLTGDS. The chain crosses the membrane as a helical span at residues 119-139; that stretch reads ALPLFIYSLVYFAIVILVSLY. Residues 140 to 149 are Cytoplasmic-facing; that stretch reads PGKLLDTVGN. The chain crosses the membrane as a helical span at residues 150–170; that stretch reads FLAPLKIIALVILSVAAIVWP. The Periplasmic portion of the chain corresponds to 171–189; that stretch reads AGSISTATEAYQNAAFSNG. A helical membrane pass occupies residues 190–210; the sequence is FVNGYLTMDTLGAMVFGIVIV. At 211–226 the chain is on the cytoplasmic side; sequence NAARSRGVTEARLLTR. Residues 227 to 247 traverse the membrane as a helical segment; that stretch reads YTVWAGLMAGVGLTLLYLALF. At 248-277 the chain is on the periplasmic side; it reads RLGSDSASLVDQSANGAAILHAYVQHTFGG. Residues 278-298 form a helical membrane-spanning segment; that stretch reads GGSFLLAALIFIACLVTAVGL. At 299-316 the chain is on the cytoplasmic side; sequence TCACAEFFAQYVPLSYRT. Residues 317 to 337 traverse the membrane as a helical segment; that stretch reads LVFILGGFSMVVSNLGLSQLI. A topological domain (periplasmic) is located at residue Gln338. A helical membrane pass occupies residues 339–359; sequence ISVPVLTAIYPPCIALVVLSF. The Cytoplasmic segment spans residues 360–369; sequence TRSWWHNSSR. A helical transmembrane segment spans residues 370–390; it reads VIAPPMFISLLFGILDGIKAS. Residues 391–404 are Periplasmic-facing; the sequence is AFSDILPSWAQRLP. The helical transmembrane segment at 405 to 425 threads the bilayer; sequence LAEQGLAWLMPTVVMVVLAII. Over 426 to 439 the chain is Cytoplasmic; the sequence is WDRAAGRQVTSSAH.

The protein belongs to the branched chain amino acid transporter family.

It is found in the cell inner membrane. Its function is as follows. Liv-II branched chain amino acid transport system, which transports leucine, valine and isoleucine. The protein is Branched-chain amino acid permease BrnQ (brnQ) of Escherichia coli O157:H7.